We begin with the raw amino-acid sequence, 460 residues long: Receptor-like cytosolic serine/threonine-protein kinase RBK2 (460 aa).

The disordered stretch occupies residues 1-67 (MNSASAHDLR…DADTDVQCKN (67 aa)). Over residues 7-23 (HDLRLLEVDKEKQDPKS) the composition is skewed to basic and acidic residues. In terms of domain architecture, Protein kinase spans 143-415 (FSPENIIGRG…VELLLGHEDV (273 aa)). ATP is bound by residues 149–157 (IGRGGYADV) and lysine 171. The active-site Proton acceptor is aspartate 267. Phosphothreonine is present on threonine 307. Tyrosine 315 bears the Phosphotyrosine mark.

It belongs to the protein kinase superfamily. Ser/Thr protein kinase family. Interacts with ARAC5 and ARAC10.

The protein resides in the cytoplasm. It catalyses the reaction L-seryl-[protein] + ATP = O-phospho-L-seryl-[protein] + ADP + H(+). The catalysed reaction is L-threonyl-[protein] + ATP = O-phospho-L-threonyl-[protein] + ADP + H(+). The sequence is that of Receptor-like cytosolic serine/threonine-protein kinase RBK2 (RBK2) from Arabidopsis thaliana (Mouse-ear cress).